Reading from the N-terminus, the 263-residue chain is Tryptophan synthase alpha chain (263 aa).

Active-site proton acceptor residues include E47 and D58.

Belongs to the TrpA family. In terms of assembly, tetramer of two alpha and two beta chains.

It localises to the plastid. It is found in the chloroplast. The catalysed reaction is (1S,2R)-1-C-(indol-3-yl)glycerol 3-phosphate + L-serine = D-glyceraldehyde 3-phosphate + L-tryptophan + H2O. The protein operates within amino-acid biosynthesis; L-tryptophan biosynthesis; L-tryptophan from chorismate: step 5/5. Its function is as follows. The alpha subunit is responsible for the aldol cleavage of indoleglycerol phosphate to indole and glyceraldehyde 3-phosphate. In Antithamnion sp. (Red alga), this protein is Tryptophan synthase alpha chain.